Reading from the N-terminus, the 369-residue chain is DNA replication and repair protein RecF (369 aa).

Residue 30–37 (GDNAQGKT) coordinates ATP.

This sequence belongs to the RecF family.

The protein resides in the cytoplasm. In terms of biological role, the RecF protein is involved in DNA metabolism; it is required for DNA replication and normal SOS inducibility. RecF binds preferentially to single-stranded, linear DNA. It also seems to bind ATP. The polypeptide is DNA replication and repair protein RecF (Streptococcus equi subsp. zooepidemicus (strain H70)).